Consider the following 324-residue polypeptide: Bis(5'-nucleosyl)-tetraphosphatase, symmetrical (324 aa).

The interval Pro269–Glu324 is disordered. Residues Ala282 to Gly297 show a composition bias toward basic residues. The span at Gly298–Gly309 shows a compositional bias: gly residues. The span at Asn310–Glu324 shows a compositional bias: low complexity.

It belongs to the Ap4A hydrolase family.

The enzyme catalyses P(1),P(4)-bis(5'-adenosyl) tetraphosphate + H2O = 2 ADP + 2 H(+). Its function is as follows. Hydrolyzes diadenosine 5',5'''-P1,P4-tetraphosphate to yield ADP. This Xanthomonas campestris pv. campestris (strain ATCC 33913 / DSM 3586 / NCPPB 528 / LMG 568 / P 25) protein is Bis(5'-nucleosyl)-tetraphosphatase, symmetrical.